The chain runs to 952 residues: Germ layers disorganized gldi-3 (952 aa).

In terms of domain architecture, FHA spans 39 to 100 (KSFGRATTND…NGTYINDRRL (62 aa)). Disordered regions lie at residues 174 to 220 (IGPR…MPST), 483 to 639 (GTPK…ESTV), and 652 to 866 (AAQS…KERC). 2 stretches are compositionally biased toward polar residues: residues 179 to 195 (PSTT…STNG) and 202 to 220 (NRAS…MPST). Residues 523-537 (EESEILDVVGTDEPD) show a composition bias toward acidic residues. Residues 553–568 (PEDHGRQTQNKIDKNV) show a composition bias toward basic and acidic residues. 2 stretches are compositionally biased toward polar residues: residues 569-584 (RMSS…TPSA) and 600-620 (VTSS…NPVS). Positions 662-679 (SVSNTTSSTSASLTTSSV) are enriched in low complexity. Over residues 685–706 (TSSKENTDQKRAVDDSSDESAR) the composition is skewed to basic and acidic residues. Residues 715-724 (SATPSSTPAE) show a composition bias toward low complexity. The span at 725–742 (SSKRKQKDTSSRKMKQLD) shows a compositional bias: basic and acidic residues. Residues 761–772 (TKRRDKARRSTR) show a composition bias toward basic residues. Over residues 789–800 (VEDEDETDDVQE) the composition is skewed to acidic residues. Composition is skewed to basic and acidic residues over residues 823–832 (IKERKTKDKD) and 856–866 (PPKTEPSKERC).

It is found in the nucleus. In terms of biological role, potential transcription factor that may play a role in the regulation of genes involved in cell cycle G1/S transition. May bind to regulatory elements of genes. This chain is Germ layers disorganized gldi-3, found in Caenorhabditis elegans.